The sequence spans 546 residues: Phosphoglucomutase (546 aa).

The active-site Phosphoserine intermediate is Ser-135. Mg(2+) is bound by residues Ser-135, Asp-288, Asp-290, and Asp-292.

The protein belongs to the phosphohexose mutase family. The cofactor is Mg(2+).

It catalyses the reaction alpha-D-glucose 1-phosphate = alpha-D-glucose 6-phosphate. It functions in the pathway glycolipid metabolism; diglucosyl-diacylglycerol biosynthesis. In terms of biological role, catalyzes the interconversion between glucose-6-phosphate and alpha-glucose-1-phosphate. This is the first step in the biosynthesis of diglucosyl-diacylglycerol (Glc2-DAG), i.e. a glycolipid found in the membrane, which is also used as a membrane anchor for lipoteichoic acid (LTA). This is Phosphoglucomutase (pgcA) from Staphylococcus epidermidis (strain ATCC 12228 / FDA PCI 1200).